The sequence spans 251 residues: GTP cyclohydrolase 1 type 2 homolog (251 aa).

5 residues coordinate a divalent metal cation: histidine 64, histidine 65, aspartate 102, histidine 219, and glutamate 223.

The protein belongs to the GTP cyclohydrolase I type 2/NIF3 family. As to quaternary structure, homohexamer.

The chain is GTP cyclohydrolase 1 type 2 homolog from Chlamydia pneumoniae (Chlamydophila pneumoniae).